A 653-amino-acid polypeptide reads, in one-letter code: Probable sulfate transporter 3.4 (653 aa).

The Cytoplasmic segment spans residues M1 to D92. A helical membrane pass occupies residues V93 to L113. Topologically, residues A114–N115 are extracellular. The helical transmembrane segment at L116–G136 threads the bilayer. Topologically, residues S137–H140 are cytoplasmic. The helical transmembrane segment at L141–V161 threads the bilayer. Residues S162 to S167 are Extracellular-facing. Residues I168–L188 form a helical membrane-spanning segment. Residues G189–G194 are Cytoplasmic-facing. The helical transmembrane segment at F195–I215 threads the bilayer. Topologically, residues V216–R247 are extracellular. The chain crosses the membrane as a helical span at residues S248–T268. At R269 to F279 the chain is on the cytoplasmic side. Residues W280–I300 traverse the membrane as a helical segment. Topologically, residues R301–H331 are extracellular. The chain crosses the membrane as a helical span at residues L332–A352. Over V353–E370 the chain is Cytoplasmic. A helical membrane pass occupies residues M371 to G391. At S392–A407 the chain is on the extracellular side. The helical transmembrane segment at V408–F428 threads the bilayer. The Cytoplasmic segment spans residues Y429–N433. A helical membrane pass occupies residues V434 to Y454. Residues K455–F471 are Extracellular-facing. A helical transmembrane segment spans residues F472–I492. Over K493–P653 the chain is Cytoplasmic. An STAS domain is found at R520–L643.

This sequence belongs to the SLC26A/SulP transporter (TC 2.A.53) family.

It is found in the membrane. In terms of biological role, h(+)/sulfate cotransporter that may play a role in the regulation of sulfate assimilation. This chain is Probable sulfate transporter 3.4 (SULTR3;4), found in Arabidopsis thaliana (Mouse-ear cress).